A 630-amino-acid chain; its full sequence is 1-deoxy-D-xylulose-5-phosphate synthase (630 aa).

Thiamine diphosphate is bound by residues histidine 72 and 113-115 (GHS). Aspartate 144 is a Mg(2+) binding site. Thiamine diphosphate-binding positions include 145 to 146 (GA), asparagine 173, tyrosine 284, and glutamate 367. Asparagine 173 contacts Mg(2+).

Belongs to the transketolase family. DXPS subfamily. As to quaternary structure, homodimer. Requires Mg(2+) as cofactor. It depends on thiamine diphosphate as a cofactor.

The enzyme catalyses D-glyceraldehyde 3-phosphate + pyruvate + H(+) = 1-deoxy-D-xylulose 5-phosphate + CO2. It participates in metabolic intermediate biosynthesis; 1-deoxy-D-xylulose 5-phosphate biosynthesis; 1-deoxy-D-xylulose 5-phosphate from D-glyceraldehyde 3-phosphate and pyruvate: step 1/1. Its function is as follows. Catalyzes the acyloin condensation reaction between C atoms 2 and 3 of pyruvate and glyceraldehyde 3-phosphate to yield 1-deoxy-D-xylulose-5-phosphate (DXP). The sequence is that of 1-deoxy-D-xylulose-5-phosphate synthase from Bacillus cereus (strain B4264).